The following is a 474-amino-acid chain: Trehalose-6-phosphate synthase (474 aa).

Arg-10 contacts D-glucose 6-phosphate. 22–23 (GG) lines the UDP-alpha-D-glucose pocket. D-glucose 6-phosphate is bound by residues Tyr-77 and Asp-131. Positions 263 and 268 each coordinate UDP-alpha-D-glucose. Residue Arg-301 participates in D-glucose 6-phosphate binding. Residues Phe-340 and 366–370 (LVAKE) each bind UDP-alpha-D-glucose.

It belongs to the glycosyltransferase 20 family. As to quaternary structure, homotetramer.

The catalysed reaction is D-glucose 6-phosphate + UDP-alpha-D-glucose = alpha,alpha-trehalose 6-phosphate + UDP + H(+). It participates in glycan biosynthesis; trehalose biosynthesis. In terms of biological role, probably involved in the osmoprotection via the biosynthesis of trehalose. Catalyzes the transfer of glucose from UDP-alpha-D-glucose (UDP-Glc) to D-glucose 6-phosphate (Glc-6-P) to form trehalose-6-phosphate. Acts with retention of the anomeric configuration of the UDP-sugar donor. The chain is Trehalose-6-phosphate synthase from Enterobacter sp. (strain 638).